Consider the following 908-residue polypeptide: Disease resistance protein RPP8 (908 aa).

Residues 15-57 (DLLSRESERLQGIDGQLDGLKRQLRSLQSLLKDADAKKHGSDR) are a coiled coil. The region spanning 146–459 (RQRVQREIRQ…AEGIYDGSTI (314 aa)) is the NB-ARC domain. An ATP-binding site is contributed by 192–199 (GMGGIGKT). 9 LRR repeats span residues 575–600 (LTLLRVLDLSWVKFEGGKLPCSIGGL), 601–623 (IHLRYLSLYEAKVSHLPSTMRNL), 648–673 (MIQLRYLSLPLKMDDKTKLELGDLVN), 693–718 (MTKLRYLAVSLSERCNFETLSSSLRE), 722–746 (LETLNFLFSLETYMVDYMGEFVLDH), 748–770 (IHLKQLGLAVRMSKIPDQHQFPP), 793–820 (LLHLKSVRLARKAFLGSRMVCSKGGFPQ), 842–867 (MPCLRTLTIDDCKKLKELPDGLKYIT), and 882–905 (KEKLVPGGEDYYKVQHIPDVQFIN).

The protein belongs to the disease resistance NB-LRR family. RPP8/HRT subfamily. In terms of assembly, interacts with the NAC protein TIP. Interacts with MORC1/CRT1. Interacts with COP1 and is subsequently degraded in a 26s proteasome dependent manner. Mostly expressed in leaves, and, to a lower extent, in roots.

It localises to the cell membrane. Its function is as follows. Disease resistance protein. Resistance proteins guard the plant against pathogens that contain an appropriate avirulence protein via an indirect interaction with this avirulence protein. That triggers a defense system including the hypersensitive response, which restricts the pathogen growth. The interaction with TIP (TCV-interacting protein) may be essential for the recognition of the avirulence proteins, and the triggering of the defense response. Triggers resistance to turnip crinkle virus (TCV) via a SAG101-dependent pathway. This Arabidopsis thaliana (Mouse-ear cress) protein is Disease resistance protein RPP8 (RPP8).